A 520-amino-acid chain; its full sequence is Cytochrome P450 monooxygenase vrtE (520 aa).

The helical transmembrane segment at 16-36 threads the bilayer; sequence ALSLLHYVLGAIFLLLLFHML. The N-linked (GlcNAc...) asparagine glycan is linked to Asn137. A heme-binding site is contributed by Cys459.

Belongs to the cytochrome P450 family. Requires heme as cofactor.

It is found in the membrane. It functions in the pathway secondary metabolite biosynthesis; terpenoid biosynthesis. Its function is as follows. Cytochrome P450 monooxygenase; part of the gene cluster that mediates the biosynthesis of viridicatumtoxin, a tetracycline-like fungal meroterpenoid with a unique, fused spirobicyclic ring system. The first step of the pathway is the production of the malonamoyl-CoA starter unit for the polyketide synthase vrtA. The aldolase vrtJ may be involved in the synthesis of the malonamate substrate for malonamoyl-CoA synthetase vrtB. The polyketide synthase vrtA then may utilize the malonamoyl-CoA starter unit, followed by sequential condensation of eight malonyl-CoA units to form the polyketide backbone. The cyclization of the last ring could be mediated by the lactamase-like protein vrtG. The proposed post-PKS tailoring steps are a hydroxylation at C5 catalyzed the cytochrome P450 monooxygenase vrtE, a hydroxylation at C12a catalyzed by VrtH and/or VrtI, and an O-methylation by the O-methyltransferase vrtF. VrtC is then proposed to catalyze the transfer of a geranyl group synthesized by vrtD to the aromatic C ring of the tetracyclic polyketide intermediate of viridicatumtoxin to yield previridicatumtoxin. Finally, the cytochrome P450 monooxygenase vrtK catalyzes the spirocyclization of the geranyl moiety of previridicatumtoxin to afford viridicatumtoxin. The sequence is that of Cytochrome P450 monooxygenase vrtE from Penicillium aethiopicum.